The primary structure comprises 180 residues: Non-structural protein 4 (180 aa).

The next 2 membrane-spanning stretches (helical) occupy residues 16–36 (VCVHKMTLLIILIISAAVTVI) and 52–72 (IVSTITDGINATIISVMAILG).

The protein resides in the host membrane. The sequence is that of Non-structural protein 4 (Segment-11) from Banna virus (BAV).